Here is a 456-residue protein sequence, read N- to C-terminus: MIKFDDKQLNNIVEQDGDKHFFIETWGCQMNEEDSEKLSGMLKSQGYEETENRDEASIVIFNTCCVRENAENKVFGNLGRLKNQKEKNPNLIIALCGCMMQQKGMADEILSRFPYVDIIFGTHNAYKFPEYLHRVQVEGVQVKEIFDKETEIVEGVPIDRKSNVKAFVTIMYGCNNFCTYCVVPYVRGRERSRRPEDIENEIKELVSSGYKEITLLGQNVNSYGKGLEEEITFAQLLRRINEIDGLERLRFMTSHPKDLTLDVVYAIRDCDKLCEQIHLPVQSGSNEILQKMNRHYNKEQYLELAKKIREEIPDVTFSTDIIVGFPGETEEDFEETINLVKEVRYDAAFTFIYSRRNHTPADKMENQIPDDVKHDRFNRLVAAVNEGIVVGNKAAEGKIYEVLVEGTSKNNENKLTGRTRNAKLVNFDGCKEMIGKLVKVKIIEAKSFSLVGEVVE.

Positions 19–137 (KHFFIETWGC…FPEYLHRVQV (119 aa)) constitute an MTTase N-terminal domain. Cysteine 28, cysteine 64, cysteine 98, cysteine 174, cysteine 178, and cysteine 181 together coordinate [4Fe-4S] cluster. The region spanning 160 to 392 (RKSNVKAFVT…AVNEGIVVGN (233 aa)) is the Radical SAM core domain. The region spanning 393 to 456 (KAAEGKIYEV…SFSLVGEVVE (64 aa)) is the TRAM domain.

It belongs to the methylthiotransferase family. MiaB subfamily. Monomer. It depends on [4Fe-4S] cluster as a cofactor.

Its subcellular location is the cytoplasm. The catalysed reaction is N(6)-dimethylallyladenosine(37) in tRNA + (sulfur carrier)-SH + AH2 + 2 S-adenosyl-L-methionine = 2-methylsulfanyl-N(6)-dimethylallyladenosine(37) in tRNA + (sulfur carrier)-H + 5'-deoxyadenosine + L-methionine + A + S-adenosyl-L-homocysteine + 2 H(+). Functionally, catalyzes the methylthiolation of N6-(dimethylallyl)adenosine (i(6)A), leading to the formation of 2-methylthio-N6-(dimethylallyl)adenosine (ms(2)i(6)A) at position 37 in tRNAs that read codons beginning with uridine. The polypeptide is tRNA-2-methylthio-N(6)-dimethylallyladenosine synthase (Clostridium botulinum (strain Eklund 17B / Type B)).